The following is a 155-amino-acid chain: 6,7-dimethyl-8-ribityllumazine synthase (155 aa).

Residues Trp23, 57-59, and 81-83 contribute to the 5-amino-6-(D-ribitylamino)uracil site; these read AWE and CVI. Position 86–87 (86–87) interacts with (2S)-2-hydroxy-3-oxobutyl phosphate; sequence DT. His89 acts as the Proton donor in catalysis. Asn114 contributes to the 5-amino-6-(D-ribitylamino)uracil binding site. Arg128 contacts (2S)-2-hydroxy-3-oxobutyl phosphate.

Belongs to the DMRL synthase family. As to quaternary structure, forms an icosahedral capsid composed of 60 subunits, arranged as a dodecamer of pentamers.

The catalysed reaction is (2S)-2-hydroxy-3-oxobutyl phosphate + 5-amino-6-(D-ribitylamino)uracil = 6,7-dimethyl-8-(1-D-ribityl)lumazine + phosphate + 2 H2O + H(+). It functions in the pathway cofactor biosynthesis; riboflavin biosynthesis; riboflavin from 2-hydroxy-3-oxobutyl phosphate and 5-amino-6-(D-ribitylamino)uracil: step 1/2. Functionally, catalyzes the formation of 6,7-dimethyl-8-ribityllumazine by condensation of 5-amino-6-(D-ribitylamino)uracil with 3,4-dihydroxy-2-butanone 4-phosphate. This is the penultimate step in the biosynthesis of riboflavin. The sequence is that of 6,7-dimethyl-8-ribityllumazine synthase from Stenotrophomonas maltophilia (strain R551-3).